We begin with the raw amino-acid sequence, 398 residues long: Enoyl-[acyl-carrier-protein] reductase [NADH] (398 aa).

NAD(+) contacts are provided by residues 48–53 (GSSTGY), 74–75 (FE), 111–112 (DA), and 139–140 (LA). Tyr-225 is a binding site for substrate. The active-site Proton donor is Tyr-235. Residues Lys-244 and 273–275 (VVT) each bind NAD(+).

This sequence belongs to the TER reductase family. In terms of assembly, monomer.

It catalyses the reaction a 2,3-saturated acyl-[ACP] + NAD(+) = a (2E)-enoyl-[ACP] + NADH + H(+). Its pathway is lipid metabolism; fatty acid biosynthesis. Involved in the final reduction of the elongation cycle of fatty acid synthesis (FAS II). Catalyzes the reduction of a carbon-carbon double bond in an enoyl moiety that is covalently linked to an acyl carrier protein (ACP). The protein is Enoyl-[acyl-carrier-protein] reductase [NADH] of Pseudomonas paraeruginosa (strain DSM 24068 / PA7) (Pseudomonas aeruginosa (strain PA7)).